The following is a 141-amino-acid chain: MAKKVVAVIKLALNAGKANPAPPVGPALGQHGVNIMMFCKEYNAKTADQAGMVIPVEISVYEDRSFTFVLKTPPASVLIRKAAKIERGSNEPNKKKVGTITTAQLREIAQTKLPDLNANDIDAAMKIVAGTARNMGVTVTD.

The protein belongs to the universal ribosomal protein uL11 family. Part of the ribosomal stalk of the 50S ribosomal subunit. Interacts with L10 and the large rRNA to form the base of the stalk. L10 forms an elongated spine to which L12 dimers bind in a sequential fashion forming a multimeric L10(L12)X complex. In terms of processing, one or more lysine residues are methylated.

Functionally, forms part of the ribosomal stalk which helps the ribosome interact with GTP-bound translation factors. The chain is Large ribosomal subunit protein uL11 from Nostoc sp. (strain PCC 7120 / SAG 25.82 / UTEX 2576).